Here is a 186-residue protein sequence, read N- to C-terminus: Potassium-transporting ATPase KdpC subunit (186 aa).

A helical membrane pass occupies residues 10 to 30; the sequence is LTIITMVLCGFLFPLAITLIG.

It belongs to the KdpC family. As to quaternary structure, the system is composed of three essential subunits: KdpA, KdpB and KdpC.

The protein localises to the cell membrane. Functionally, part of the high-affinity ATP-driven potassium transport (or Kdp) system, which catalyzes the hydrolysis of ATP coupled with the electrogenic transport of potassium into the cytoplasm. This subunit acts as a catalytic chaperone that increases the ATP-binding affinity of the ATP-hydrolyzing subunit KdpB by the formation of a transient KdpB/KdpC/ATP ternary complex. The protein is Potassium-transporting ATPase KdpC subunit of Staphylococcus aureus (strain COL).